The following is an 873-amino-acid chain: Envelope glycoprotein B (873 aa).

The signal sequence occupies residues 1–21 (MASLKMLICVCVAILIPSTLS). At 22–740 (QDSHGIAGII…SGIASFLSNP (719 aa)) the chain is on the virion surface side. 5 cysteine pairs are disulfide-bonded: C67/C525, C84/C481, C157/C219, C311/C359, and C548/C598. 2 N-linked (GlcNAc...) asparagine; by host glycosylation sites follow: N92 and N111. Positions 124 to 130 (TWALFSR) are involved in fusion and/or binding to host membrane. Residue N201 is glycosylated (N-linked (GlcNAc...) asparagine; by host). Positions 206–213 (HQTLGYRT) are involved in fusion and/or binding to host membrane. N-linked (GlcNAc...) asparagine; by host glycans are attached at residues N252 and N350. Residues 418 to 447 (QNHLPRGRERRQAAGRRTASLQSGPQGDRI) are disordered. 3 N-linked (GlcNAc...) asparagine; by host glycosylation sites follow: N569, N625, and N639. 2 hydrophobic membrane proximal region regions span residues 684–738 (IDTV…SFLS) and 715–734 (LGTVVMTAAAAVISTVSGIA). Residues 741–761 (FAALGIGIAVVVSIILGLLAF) traverse the membrane as a helical segment. The Intravirion segment spans residues 762-873 (KYVMNLKSNP…PSWAEESEDE (112 aa)). Positions 781 to 807 (PPAGTPPRPSRRYYKDEEEVEEDSDED) are disordered. A compositionally biased stretch (acidic residues) spans 796-807 (DEEEVEEDSDED). An Internalization motif motif is present at residues 858 to 861 (YPLL).

Belongs to the herpesviridae glycoprotein B family. Homotrimer; disulfide-linked. Binds to heparan sulfate proteoglycans. Interacts with gH/gL heterodimer. Post-translationally, a proteolytic cleavage by host furin generates two subunits that remain linked by disulfide bonds.

It localises to the virion membrane. Its subcellular location is the host cell membrane. The protein resides in the host endosome membrane. The protein localises to the host Golgi apparatus membrane. In terms of biological role, envelope glycoprotein that forms spikes at the surface of virion envelope. Essential for the initial attachment to heparan sulfate moieties of the host cell surface proteoglycans. Involved in fusion of viral and cellular membranes leading to virus entry into the host cell. Following initial binding to its host receptors, membrane fusion is mediated by the fusion machinery composed at least of gB and the heterodimer gH/gL. May be involved in the fusion between the virion envelope and the outer nuclear membrane during virion egress. In Infectious laryngotracheitis virus (strain 632) (ILTV), this protein is Envelope glycoprotein B.